A 359-amino-acid polypeptide reads, in one-letter code: Heat-inducible transcription repressor HrcA (359 aa).

It belongs to the HrcA family.

Functionally, negative regulator of class I heat shock genes (grpE-dnaK-dnaJ and groELS operons). Prevents heat-shock induction of these operons. The polypeptide is Heat-inducible transcription repressor HrcA (Rhizobium meliloti (strain 1021) (Ensifer meliloti)).